We begin with the raw amino-acid sequence, 445 residues long: RNA pseudouridine synthase 2, chloroplastic (445 aa).

The N-terminal 44 residues, methionine 1–asparagine 44, are a transit peptide targeting the chloroplast. A disordered region spans residues alanine 47–proline 66. The region spanning serine 72–aspartate 147 is the S4 RNA-binding domain. The active site involves aspartate 235.

The protein belongs to the pseudouridine synthase RluA family.

Its subcellular location is the plastid. The protein localises to the chloroplast. The catalysed reaction is a uridine in RNA = a pseudouridine in RNA. The protein is RNA pseudouridine synthase 2, chloroplastic of Oryza sativa subsp. japonica (Rice).